We begin with the raw amino-acid sequence, 246 residues long: Probable fimbrial chaperone YadV (246 aa).

Positions 1-25 (MFFNTKHTTALCFVTCMAFSSSSIA) are cleaved as a signal peptide.

The protein belongs to the periplasmic pilus chaperone family.

It localises to the periplasm. Its function is as follows. Part of the yadCKLM-htrE-yadVN fimbrial operon. Could contribute to adhesion to various surfaces in specific environmental niches. The polypeptide is Probable fimbrial chaperone YadV (yadV) (Escherichia coli (strain K12)).